We begin with the raw amino-acid sequence, 142 residues long: Large ribosomal subunit protein uL13 (142 aa).

It belongs to the universal ribosomal protein uL13 family. As to quaternary structure, part of the 50S ribosomal subunit.

Its function is as follows. This protein is one of the early assembly proteins of the 50S ribosomal subunit, although it is not seen to bind rRNA by itself. It is important during the early stages of 50S assembly. The sequence is that of Large ribosomal subunit protein uL13 from Dechloromonas aromatica (strain RCB).